A 347-amino-acid chain; its full sequence is NADH-quinone oxidoreductase subunit H (347 aa).

9 consecutive transmembrane segments (helical) span residues 13 to 33 (IIMI…IAYV), 50 to 70 (PNVV…KFVF), 82 to 102 (AVFL…WAVV), 115 to 135 (VGIL…IMGG), 161 to 181 (IGFV…TDIV), 198 to 218 (FLDW…ISAL), 263 to 283 (CALT…IWIL), 286 to 306 (VPGI…FAMV), and 321 to 341 (LGWK…AFVL).

The protein belongs to the complex I subunit 1 family. As to quaternary structure, NDH-1 is composed of 14 different subunits. Subunits NuoA, H, J, K, L, M, N constitute the membrane sector of the complex.

Its subcellular location is the cell inner membrane. The catalysed reaction is a quinone + NADH + 5 H(+)(in) = a quinol + NAD(+) + 4 H(+)(out). Functionally, NDH-1 shuttles electrons from NADH, via FMN and iron-sulfur (Fe-S) centers, to quinones in the respiratory chain. The immediate electron acceptor for the enzyme in this species is believed to be ubiquinone. Couples the redox reaction to proton translocation (for every two electrons transferred, four hydrogen ions are translocated across the cytoplasmic membrane), and thus conserves the redox energy in a proton gradient. This subunit may bind ubiquinone. This Rhizobium johnstonii (strain DSM 114642 / LMG 32736 / 3841) (Rhizobium leguminosarum bv. viciae) protein is NADH-quinone oxidoreductase subunit H.